The chain runs to 901 residues: HTH-type transcriptional regulator MalT (901 aa).

39 to 46 provides a ligand contact to ATP; it reads SPAGYGKT. The HTH luxR-type domain maps to 829 to 894; sequence ELIRTSPLTQ…AAVQHAQKLL (66 aa). A DNA-binding region (H-T-H motif) is located at residues 853–872; that stretch reads NEQIAGELEVAATTIKTHIR.

The protein belongs to the MalT family. Monomer in solution. Oligomerizes to an active state in the presence of the positive effectors ATP and maltotriose.

With respect to regulation, activated by ATP and maltotriose, which are both required for DNA binding. Functionally, positively regulates the transcription of the maltose regulon whose gene products are responsible for uptake and catabolism of malto-oligosaccharides. Specifically binds to the promoter region of its target genes, recognizing a short DNA motif called the MalT box. The polypeptide is HTH-type transcriptional regulator MalT (Shigella flexneri serotype 5b (strain 8401)).